A 102-amino-acid chain; its full sequence is UPF0473 protein SERP1179 (102 aa).

This sequence belongs to the UPF0473 family.

This Staphylococcus epidermidis (strain ATCC 35984 / DSM 28319 / BCRC 17069 / CCUG 31568 / BM 3577 / RP62A) protein is UPF0473 protein SERP1179.